Here is a 740-residue protein sequence, read N- to C-terminus: Catalase-peroxidase 2 (740 aa).

Positions 1–27 (MFKKTKPRISILALTISCAIYSGAALA) are cleaved as a signal peptide. Positions 106 to 228 (WHSAGTYRIY…LAAVQMGLIY (123 aa)) form a cross-link, tryptophyl-tyrosyl-methioninium (Trp-Tyr) (with M-254). His107 (proton acceptor) is an active-site residue. The tryptophyl-tyrosyl-methioninium (Tyr-Met) (with W-106) cross-link spans 228–254 (YVNPEGPNGVPDPLLAAKDIRDTFGRM). Residue His269 participates in heme b binding.

This sequence belongs to the peroxidase family. Peroxidase/catalase subfamily. As to quaternary structure, homodimer or homotetramer. Heme b serves as cofactor. Post-translationally, formation of the three residue Trp-Tyr-Met cross-link is important for the catalase, but not the peroxidase activity of the enzyme.

The enzyme catalyses H2O2 + AH2 = A + 2 H2O. The catalysed reaction is 2 H2O2 = O2 + 2 H2O. Functionally, bifunctional enzyme with both catalase and broad-spectrum peroxidase activity. The sequence is that of Catalase-peroxidase 2 from Cellvibrio japonicus (strain Ueda107) (Pseudomonas fluorescens subsp. cellulosa).